Here is a 162-residue protein sequence, read N- to C-terminus: Nucleotide-binding protein Anae109_0095 (162 aa).

The protein belongs to the YajQ family.

Functionally, nucleotide-binding protein. The protein is Nucleotide-binding protein Anae109_0095 of Anaeromyxobacter sp. (strain Fw109-5).